A 517-amino-acid polypeptide reads, in one-letter code: Endoglucanase A (517 aa).

The first 25 residues, 1–25, serve as a signal peptide directing secretion; sequence MKRSLLKTCSIIAGATIIFSSLSIS. The active-site Proton donor is E185. The active-site Nucleophile is E309. The segment covering 382-392 has biased composition (basic and acidic residues); it reads HPEATEDDKPS. A disordered region spans residues 382–424; that stretch reads HPEATEDDKPSTDVTNPDSGNTKPDSGNTNPGTETTTPTDNEK. Residues 393-407 show a composition bias toward polar residues; it reads TDVTNPDSGNTKPDS. Over residues 408 to 420 the composition is skewed to low complexity; sequence GNTNPGTETTTPT. The CBM2 domain occupies 416 to 517; it reads TTTPTDNEKI…VISNFEYKFD (102 aa).

Belongs to the glycosyl hydrolase 5 (cellulase A) family.

It catalyses the reaction Endohydrolysis of (1-&gt;4)-beta-D-glucosidic linkages in cellulose, lichenin and cereal beta-D-glucans.. Its function is as follows. Hydrolyzes barley beta-glucan, lichenan, carboxymethylcellulose and xylan. It shows preferential activity against the larger cellooligosaccharides (cellohexaose and cellopentaose); cellotetraose is the smallest substrate degraded completely. The polypeptide is Endoglucanase A (celA) (Clostridium longisporum).